We begin with the raw amino-acid sequence, 237 residues long: tRNA (guanine-N(7)-)-methyltransferase (237 aa).

Asp-35, Glu-60, Asn-87, and Asp-113 together coordinate S-adenosyl-L-methionine. Asp-113 is a catalytic residue. Lys-117 and Asp-149 together coordinate substrate.

The protein belongs to the class I-like SAM-binding methyltransferase superfamily. TrmB family.

The enzyme catalyses guanosine(46) in tRNA + S-adenosyl-L-methionine = N(7)-methylguanosine(46) in tRNA + S-adenosyl-L-homocysteine. The protein operates within tRNA modification; N(7)-methylguanine-tRNA biosynthesis. Catalyzes the formation of N(7)-methylguanine at position 46 (m7G46) in tRNA. In Synechococcus sp. (strain CC9311), this protein is tRNA (guanine-N(7)-)-methyltransferase.